The sequence spans 594 residues: Proline--tRNA ligase (594 aa).

This sequence belongs to the class-II aminoacyl-tRNA synthetase family. ProS type 1 subfamily. As to quaternary structure, homodimer.

The protein resides in the cytoplasm. It catalyses the reaction tRNA(Pro) + L-proline + ATP = L-prolyl-tRNA(Pro) + AMP + diphosphate. Catalyzes the attachment of proline to tRNA(Pro) in a two-step reaction: proline is first activated by ATP to form Pro-AMP and then transferred to the acceptor end of tRNA(Pro). As ProRS can inadvertently accommodate and process non-cognate amino acids such as alanine and cysteine, to avoid such errors it has two additional distinct editing activities against alanine. One activity is designated as 'pretransfer' editing and involves the tRNA(Pro)-independent hydrolysis of activated Ala-AMP. The other activity is designated 'posttransfer' editing and involves deacylation of mischarged Ala-tRNA(Pro). The misacylated Cys-tRNA(Pro) is not edited by ProRS. This chain is Proline--tRNA ligase, found in Synechococcus sp. (strain WH7803).